The primary structure comprises 287 residues: Putative B3 domain-containing protein Os08g0157700 (287 aa).

The segment covering 17 to 29 has biased composition (acidic residues); it reads ATEEEEEEEEEEQ. The interval 17–36 is disordered; sequence ATEEEEEEEEEEQALGQEPA. Positions 71 to 168 form a DNA-binding region, TF-B3; the sequence is FDKVVTPSDV…RYFIDYRHCH (98 aa).

It is found in the nucleus. The chain is Putative B3 domain-containing protein Os08g0157700 from Oryza sativa subsp. japonica (Rice).